Here is a 448-residue protein sequence, read N- to C-terminus: ATP-dependent protease ATPase subunit HslU (448 aa).

ATP-binding positions include Ile-23, 65–70 (GIGKTE), Asp-263, Glu-327, and Arg-399.

It belongs to the ClpX chaperone family. HslU subfamily. In terms of assembly, a double ring-shaped homohexamer of HslV is capped on each side by a ring-shaped HslU homohexamer. The assembly of the HslU/HslV complex is dependent on binding of ATP.

Its subcellular location is the cytoplasm. Functionally, ATPase subunit of a proteasome-like degradation complex; this subunit has chaperone activity. The binding of ATP and its subsequent hydrolysis by HslU are essential for unfolding of protein substrates subsequently hydrolyzed by HslV. HslU recognizes the N-terminal part of its protein substrates and unfolds these before they are guided to HslV for hydrolysis. In Borreliella burgdorferi (strain ATCC 35210 / DSM 4680 / CIP 102532 / B31) (Borrelia burgdorferi), this protein is ATP-dependent protease ATPase subunit HslU.